We begin with the raw amino-acid sequence, 55 residues long: Spermatid nuclear transition protein 1 (55 aa).

The span at 1-42 (MSTSRKLKSHGMRRGKNRAPHKGVKRGGSKRKYRKGSLKSRK) shows a compositional bias: basic residues. The tract at residues 1–55 (MSTSRKLKSHGMRRGKNRAPHKGVKRGGSKRKYRKGSLKSRKRCDDANRNYRSHL) is disordered. Phosphoserine occurs at positions 9, 37, and 40.

Belongs to the nuclear transition protein 1 family. As to expression, testis.

It localises to the nucleus. Its subcellular location is the chromosome. In terms of biological role, plays a key role in the replacement of histones to protamine in the elongating spermatids of mammals. In condensing spermatids, loaded onto the nucleosomes, where it promotes the recruitment and processing of protamines, which are responsible for histone eviction. The chain is Spermatid nuclear transition protein 1 (TNP1) from Sus scrofa (Pig).